The primary structure comprises 259 residues: UPF0246 protein PSPA7_1607 (259 aa).

The protein belongs to the UPF0246 family.

In Pseudomonas paraeruginosa (strain DSM 24068 / PA7) (Pseudomonas aeruginosa (strain PA7)), this protein is UPF0246 protein PSPA7_1607.